We begin with the raw amino-acid sequence, 297 residues long: HTH-type transcriptional regulator ArgP (297 aa).

The 57-residue stretch at 4–60 (PDYRTLQALDAVIRERGFERAAQKLCITQSAVSQRIKQLENTFGQPLLVRTVPPRPT) folds into the HTH lysR-type domain. Positions 21–40 (FERAAQKLCITQSAVSQRIK) form a DNA-binding region, H-T-H motif.

Belongs to the LysR transcriptional regulatory family. Homodimer.

Functionally, controls the transcription of genes involved in arginine and lysine metabolism. This chain is HTH-type transcriptional regulator ArgP, found in Cronobacter sakazakii (strain ATCC BAA-894) (Enterobacter sakazakii).